The sequence spans 171 residues: ATP synthase subunit b (171 aa).

Residues 12-34 form a helical membrane-spanning segment; it reads FALNLNLFETNVINLAVVAFGLY.

It belongs to the ATPase B chain family. As to quaternary structure, F-type ATPases have 2 components, F(1) - the catalytic core - and F(0) - the membrane proton channel. F(1) has five subunits: alpha(3), beta(3), gamma(1), delta(1), epsilon(1). F(0) has four main subunits: a(1), b(1), b'(1) and c(10-14). The alpha and beta chains form an alternating ring which encloses part of the gamma chain. F(1) is attached to F(0) by a central stalk formed by the gamma and epsilon chains, while a peripheral stalk is formed by the delta, b and b' chains.

The protein resides in the cellular thylakoid membrane. Functionally, f(1)F(0) ATP synthase produces ATP from ADP in the presence of a proton or sodium gradient. F-type ATPases consist of two structural domains, F(1) containing the extramembraneous catalytic core and F(0) containing the membrane proton channel, linked together by a central stalk and a peripheral stalk. During catalysis, ATP synthesis in the catalytic domain of F(1) is coupled via a rotary mechanism of the central stalk subunits to proton translocation. Its function is as follows. Component of the F(0) channel, it forms part of the peripheral stalk, linking F(1) to F(0). In Prochlorococcus marinus (strain SARG / CCMP1375 / SS120), this protein is ATP synthase subunit b.